The primary structure comprises 522 residues: MAAQLLEEDVVTCSICLGRYRDPVTLPCGHSFCGNCIQDSWRSCEKSCPECRQPFPEGAKLSRNVKMSTLLQALPVLPAPPAVTPRRDSATSHSARCLRHGRPLEFFCRTEGLCVCSACTVHDCSHHERALLDVERRVREDQLRARVLVTQQQVAQAETQLQELQEQRSRIESSACTLASVVSRRFSSLLQALEKQQASTLSDIEVAKKQALGQVLNEKQRLTDHLRALSQYDQSVQDLLAQADDCIFFQELQQLPEPTESLGPLTSPQWNEEQQLSNVNQLLSPLCELLLEEKSLPKVAAKAADAGPLETLGPLAPVPSAVCPLRKKLWQNYRNLTFDPETANQYLHLSHKDQRVTHHFQAQGPAKSGSFELWQVQCTQSFQTGQHYWEVRVSDHSVTLGVTYPKLSRQKLGTHTDNIGRGPCSWGLCIQEDSMQAWHNGKSQRLRGLPGQLLGVDLNLTSGCLTFYSLEPRTQPLHTFYAVFSQPLFPVFWLLEGRTLTLCHQPEATLPARPQEEATAPS.

An N-acetylalanine modification is found at Ala2. An RING-type zinc finger spans residues Cys13–Arg52. The B box-type zinc-finger motif lies at Ser92–Val134. Positions Asp141 to Leu229 form a coiled coil. A Phosphoserine modification is found at Ser187. The 194-residue stretch at Ala316–Thr509 folds into the B30.2/SPRY domain.

This sequence belongs to the TRIM/RBCC family. In terms of assembly, homo-multimerizes. Interacts with ARRDC4.

It localises to the cytoplasm. The catalysed reaction is S-ubiquitinyl-[E2 ubiquitin-conjugating enzyme]-L-cysteine + [acceptor protein]-L-lysine = [E2 ubiquitin-conjugating enzyme]-L-cysteine + N(6)-ubiquitinyl-[acceptor protein]-L-lysine.. Its pathway is protein modification; protein ubiquitination. Its function is as follows. E3 ubiquitin ligase that plays a role in several processes including innate immnity, autophagy or inflammation. Negatively regulates miRNAs by modulating the ubiquitination and stability of TNRC6A, a protein involved in RNA-mediated gene silencing by both micro-RNAs (miRNAs) and short interfering RNAs. This ubiquitination results in the suppressed expression of miR-138-5p leading to increased autophagy. Upon enteroviral infection, promotes 'Lys-63'-mediated ubiquitination activation of IFIH1/MDA5 leading to innate signaling cascade. Mechanistically, selectively recognizes MDA5 filaments that occur on dsRNAs. Also plays a role in limitation of inflammation through different mechanisms. First, promotes 'Lys-48'-mediated ubiquitination of VCAM1 leading to its degradation and limitation of LPS-induced lung inflammation. In addition, negatively regulates inflammasome activation by promoting 'lys48'-linked ubiquitination of NLRP3 which is critical for the inhibition of NLRP3 inflammasome activation in resting macrophages. This is E3 ubiquitin-protein ligase TRIM65 (Trim65) from Mus musculus (Mouse).